The sequence spans 149 residues: UPF0260 protein PSEEN4031 (149 aa).

This sequence belongs to the UPF0260 family.

In Pseudomonas entomophila (strain L48), this protein is UPF0260 protein PSEEN4031.